The chain runs to 186 residues: Peptidyl-tRNA hydrolase (186 aa).

Tyrosine 16 contributes to the tRNA binding site. Catalysis depends on histidine 21, which acts as the Proton acceptor. Positions 66, 68, and 114 each coordinate tRNA.

The protein belongs to the PTH family. As to quaternary structure, monomer.

The protein localises to the cytoplasm. It catalyses the reaction an N-acyl-L-alpha-aminoacyl-tRNA + H2O = an N-acyl-L-amino acid + a tRNA + H(+). Functionally, hydrolyzes ribosome-free peptidyl-tRNAs (with 1 or more amino acids incorporated), which drop off the ribosome during protein synthesis, or as a result of ribosome stalling. In terms of biological role, catalyzes the release of premature peptidyl moieties from peptidyl-tRNA molecules trapped in stalled 50S ribosomal subunits, and thus maintains levels of free tRNAs and 50S ribosomes. This chain is Peptidyl-tRNA hydrolase, found in Ureaplasma parvum serovar 3 (strain ATCC 700970).